The primary structure comprises 212 residues: Large ribosomal subunit protein uL3 (212 aa).

N5-methylglutamine is present on Gln-153.

This sequence belongs to the universal ribosomal protein uL3 family. Part of the 50S ribosomal subunit. Forms a cluster with proteins L14 and L19. Post-translationally, methylated by PrmB.

Its function is as follows. One of the primary rRNA binding proteins, it binds directly near the 3'-end of the 23S rRNA, where it nucleates assembly of the 50S subunit. This is Large ribosomal subunit protein uL3 from Dechloromonas aromatica (strain RCB).